Reading from the N-terminus, the 130-residue chain is ATP synthase epsilon chain (130 aa).

Belongs to the ATPase epsilon chain family. As to quaternary structure, F-type ATPases have 2 components, CF(1) - the catalytic core - and CF(0) - the membrane proton channel. CF(1) has five subunits: alpha(3), beta(3), gamma(1), delta(1), epsilon(1). CF(0) has three main subunits: a, b and c.

It is found in the cell inner membrane. Produces ATP from ADP in the presence of a proton gradient across the membrane. The polypeptide is ATP synthase epsilon chain (Pelagibacter ubique (strain HTCC1062)).